A 451-amino-acid polypeptide reads, in one-letter code: Lipase member H (451 aa).

A signal peptide spans 1 to 16 (MLRLCFLLSFMCLVKS). An N-linked (GlcNAc...) asparagine glycan is attached at N66. The active-site Nucleophile is S154. Catalysis depends on D178, which acts as the Charge relay system. C233 and C246 are oxidised to a cystine. H248 serves as the catalytic Charge relay system. Cystine bridges form between C270/C281, C284/C292, and C427/C446.

It belongs to the AB hydrolase superfamily. Lipase family. In terms of assembly, interacts with TTMP/C3orf52.

The protein localises to the secreted. Its subcellular location is the cell membrane. It carries out the reaction 1-hexadecanoyl-2-(9Z-octadecenoyl)-sn-glycero-3-phosphate + H2O = 2-(9Z-octadecenoyl)-sn-glycero-3-phosphate + hexadecanoate + H(+). Hydrolyzes specifically phosphatidic acid (PA) to produce 2-acyl lysophosphatidic acid (LPA; a potent bioactive lipid mediator) and fatty acid. Does not hydrolyze other phospholipids, like phosphatidylserine (PS), phosphatidylcholine (PC) and phosphatidylethanolamine (PE) or triacylglycerol (TG). The chain is Lipase member H (Liph) from Rattus norvegicus (Rat).